The chain runs to 363 residues: Peptide chain release factor 2 (363 aa).

N5-methylglutamine is present on glutamine 251.

Belongs to the prokaryotic/mitochondrial release factor family. Post-translationally, methylated by PrmC. Methylation increases the termination efficiency of RF2.

Its subcellular location is the cytoplasm. Functionally, peptide chain release factor 2 directs the termination of translation in response to the peptide chain termination codons UGA and UAA. This chain is Peptide chain release factor 2, found in Helicobacter pylori (strain P12).